The sequence spans 118 residues: Myotrophin (118 aa).

ANK repeat units lie at residues 1 to 30 (MGDK…DVNR), 34 to 65 (GGRK…NAAD), and 67 to 98 (HGIT…NVKG).

Belongs to the myotrophin family.

The protein resides in the cytoplasm. It is found in the nucleus. It localises to the perinuclear region. In terms of biological role, regulates NF-kappa-B transcription factor activity. Promotes growth of cardiomyocytes, but not cardiomyocyte proliferation. Promotes cardiac muscle hypertrophy. Plays a role in the regulation of the growth of actin filaments. Inhibits the activity of the F-actin-capping protein complex. In Xenopus laevis (African clawed frog), this protein is Myotrophin (mtpn).